We begin with the raw amino-acid sequence, 243 residues long: Thaumatin-like protein (243 aa).

The signal sequence occupies residues 1 to 20; that stretch reads MASINLFLFAFLLLLSHASA. 8 disulfides stabilise this stretch: Cys29–Cys238, Cys77–Cys87, Cys92–Cys98, Cys144–Cys228, Cys149–Cys211, Cys157–Cys174, Cys178–Cys187, and Cys188–Cys198.

Belongs to the thaumatin family.

The polypeptide is Thaumatin-like protein (Arabidopsis thaliana (Mouse-ear cress)).